The sequence spans 248 residues: N-acylneuraminate-9-phosphatase (248 aa).

Position 12 (D12) interacts with Mg(2+). The phosphate site is built by L13, D14, T131, N132, and K164. D14 is a binding site for Mg(2+). D189 provides a ligand contact to Mg(2+).

Belongs to the HAD-like hydrolase superfamily. NANP family. The cofactor is Mg(2+).

It catalyses the reaction N-acetylneuraminate 9-phosphate + H2O = N-acetylneuraminate + phosphate. The catalysed reaction is N-glycoloylneuraminate 9-phosphate + H2O = N-glycoloylneuraminate + phosphate. The protein operates within amino-sugar metabolism; N-acetylneuraminate biosynthesis. Its activity is regulated as follows. Inhibited by calcium. Inhibited by vanadate, sodium orthovanate and phosphonate. Functionally, catalyzes the dephosphorylation of N-acylneuraminate 9-phosphate (Neu5Ac-9-P) to sialic acid N-acetylneuraminic acid (Neu5Ac). May also use N-glycoloylneuraminate 9-phosphate as substrate. This is N-acylneuraminate-9-phosphatase from Mus musculus (Mouse).